A 400-amino-acid polypeptide reads, in one-letter code: Poly(A) polymerase type 3 (400 aa).

Residues F97–S99, T106, D110–D112, D164, K225, Y234, and G243–V244 each bind ATP. Residues D110, D112, and D164 each contribute to the Mg(2+) site. The Nuclear localization signal motif lies at G382–K390.

The protein belongs to the poly(A) polymerase family. Monomer. Mg(2+) serves as cofactor. Requires Mn(2+) as cofactor.

The protein localises to the nucleus. The enzyme catalyses RNA(n) + ATP = RNA(n)-3'-adenine ribonucleotide + diphosphate. In terms of biological role, polymerase that creates the 3'-poly(A) tail of mRNA's. May acquire specificity through interaction with a cleavage and polyadenylation factor (CPSF). The polypeptide is Poly(A) polymerase type 3 (Xenopus laevis (African clawed frog)).